Reading from the N-terminus, the 694-residue chain is Follicle-stimulating hormone receptor (694 aa).

A signal peptide spans Met-1–Gly-17. Disulfide bonds link Cys-18–Cys-25 and Cys-23–Cys-32. The LRRNT domain maps to Cys-18–Arg-46. Residues Cys-18–Arg-365 are Extracellular-facing. LRR repeat units lie at residues Ile-49 to Leu-72, Glu-73 to Leu-97, His-98 to Asn-118, Leu-119 to Ser-143, Leu-144 to Ser-169, Phe-170 to Gly-192, Thr-193 to Gly-216, Ala-217 to Asn-240, and Leu-241 to Asp-259. N-linked (GlcNAc...) asparagine glycans are attached at residues Asn-191 and Asn-199. 4 cysteine pairs are disulfide-bonded: Cys-275/Cys-345, Cys-276/Cys-292, Cys-276/Cys-355, and Cys-292/Cys-337. Asn-293 and Asn-311 each carry an N-linked (GlcNAc...) asparagine glycan. Residues Val-366 to Leu-386 form a helical membrane-spanning segment. Residues Thr-387–Arg-397 are Cytoplasmic-facing. Residues Phe-398–Val-420 form a helical membrane-spanning segment. Topologically, residues Asp-421–Asp-442 are extracellular. A disulfide bond links Cys-441 and Cys-516. The chain crosses the membrane as a helical span at residues Ala-443–Leu-464. Residues Glu-465–His-484 are Cytoplasmic-facing. The chain crosses the membrane as a helical span at residues Ala-485–Val-507. The Extracellular portion of the chain corresponds to Ser-508–Gln-527. Residues Leu-528 to Thr-549 traverse the membrane as a helical segment. Residues His-550 to Arg-572 are Cytoplasmic-facing. Residues Met-573–Leu-596 traverse the membrane as a helical segment. Residues Lys-597 to Lys-607 lie on the Extracellular side of the membrane. The helical transmembrane segment at Ile-608–Thr-629 threads the bilayer. At Lys-630–Asn-694 the chain is on the cytoplasmic side.

This sequence belongs to the G-protein coupled receptor 1 family. FSH/LSH/TSH subfamily. In terms of assembly, homotrimer. Functions as a homotrimer binding the FSH hormone heterodimer composed of CGA and FSHB. Interacts with ARRB2. Interacts with APPL2; interaction is independent of follicle stimulating hormone stimulation. Post-translationally, N-glycosylated; indirectly required for FSH-binding, possibly via a conformational change that allows high affinity binding of hormone.

The protein resides in the cell membrane. In terms of biological role, g protein-coupled receptor for follitropin, the follicle-stimulating hormone. Through cAMP production activates the downstream PI3K-AKT and ERK1/ERK2 signaling pathways. The sequence is that of Follicle-stimulating hormone receptor (FSHR) from Mesocricetus auratus (Golden hamster).